The following is a 154-amino-acid chain: Superoxide dismutase [Cu-Zn] (154 aa).

Residues His-47, His-49, and His-64 each coordinate Cu cation. Cys-58 and Cys-147 are disulfide-bonded. Zn(2+) contacts are provided by His-64, His-72, His-81, and Asp-84. His-121 is a binding site for Cu cation. Over residues 124-137 the composition is skewed to basic and acidic residues; it reads TDDLGKGENEESKK. The segment at 124–144 is disordered; the sequence is TDDLGKGENEESKKTGNAGTR. Arg-144 contributes to the substrate binding site.

This sequence belongs to the Cu-Zn superoxide dismutase family. Homodimer. Requires Cu cation as cofactor. Zn(2+) is required as a cofactor.

The protein resides in the cytoplasm. It carries out the reaction 2 superoxide + 2 H(+) = H2O2 + O2. Functionally, destroys radicals which are normally produced within the cells and which are toxic to biological systems. The polypeptide is Superoxide dismutase [Cu-Zn] (sod1) (Botryotinia fuckeliana (Noble rot fungus)).